The chain runs to 285 residues: HTH-type transcriptional regulator YofA (285 aa).

Residues Met-1–Thr-58 enclose the HTH lysR-type domain. The H-T-H motif DNA-binding region spans Ile-18–His-37.

It belongs to the LysR transcriptional regulatory family.

It is found in the cytoplasm. Functionally, regulates expression of the cell division protein ftsW, and is essential for cell viability during stationary phase. This is HTH-type transcriptional regulator YofA (yofA) from Bacillus subtilis (strain 168).